Reading from the N-terminus, the 225-residue chain is tRNA (guanine-N(1)-)-methyltransferase (225 aa).

S-adenosyl-L-methionine-binding positions include Gly-112 and Ile-132 to Leu-137.

Belongs to the RNA methyltransferase TrmD family. In terms of assembly, homodimer.

The protein localises to the cytoplasm. The enzyme catalyses guanosine(37) in tRNA + S-adenosyl-L-methionine = N(1)-methylguanosine(37) in tRNA + S-adenosyl-L-homocysteine + H(+). Specifically methylates guanosine-37 in various tRNAs. The sequence is that of tRNA (guanine-N(1)-)-methyltransferase from Porphyromonas gingivalis (strain ATCC BAA-308 / W83).